The chain runs to 363 residues: Cytochrome c oxidase subunit 2 (363 aa).

The interval 1–23 (MTPRGPGRLQRLSQCRPQRGSGG) is disordered. A signal peptide spans 1 to 41 (MTPRGPGRLQRLSQCRPQRGSGGPARGLRQLALAAMLGALA). Helical transmembrane passes span 71–91 (LWIGAVIASLAVGVIVWGLIF) and 118–138 (LVLTVIPFLIISVLFYFTVVV). His254, Cys295, Cys299, and His303 together coordinate Cu cation.

This sequence belongs to the cytochrome c oxidase subunit 2 family. Cu cation is required as a cofactor. Requires heme as cofactor.

The protein resides in the cell membrane. It catalyses the reaction 4 Fe(II)-[cytochrome c] + O2 + 8 H(+)(in) = 4 Fe(III)-[cytochrome c] + 2 H2O + 4 H(+)(out). Subunits I and II form the functional core of the enzyme complex. Electrons originating in cytochrome c are transferred via heme a and Cu(A) to the binuclear center formed by heme a3 and Cu(B). The protein is Cytochrome c oxidase subunit 2 (ctaC) of Mycobacterium bovis (strain ATCC BAA-935 / AF2122/97).